A 495-amino-acid polypeptide reads, in one-letter code: Leucine aminopeptidase 2 (495 aa).

The N-terminal stretch at M1 to G21 is a signal peptide. The region spanning P124–V218 is the PA domain. N-linked (GlcNAc...) asparagine glycosylation is found at N142 and N235. H259 and D271 together coordinate Zn(2+). Residue N272 is glycosylated (N-linked (GlcNAc...) asparagine). The Proton acceptor role is filled by E303. Residues E304 and D332 each coordinate Zn(2+). A glycan (N-linked (GlcNAc...) asparagine) is linked at N352. H430 serves as a coordination point for Zn(2+).

It belongs to the peptidase M28 family. M28A subfamily. Monomer. Zn(2+) serves as cofactor.

It is found in the secreted. Extracellular aminopeptidase that releases a wide variety of amino acids from natural peptides and contributes to pathogenicity. The polypeptide is Leucine aminopeptidase 2 (LAP2) (Trichophyton tonsurans (Scalp ringworm fungus)).